A 226-amino-acid polypeptide reads, in one-letter code: 2-C-methyl-D-erythritol 4-phosphate cytidylyltransferase (226 aa).

It belongs to the IspD/TarI cytidylyltransferase family. IspD subfamily.

It catalyses the reaction 2-C-methyl-D-erythritol 4-phosphate + CTP + H(+) = 4-CDP-2-C-methyl-D-erythritol + diphosphate. Its pathway is isoprenoid biosynthesis; isopentenyl diphosphate biosynthesis via DXP pathway; isopentenyl diphosphate from 1-deoxy-D-xylulose 5-phosphate: step 2/6. Functionally, catalyzes the formation of 4-diphosphocytidyl-2-C-methyl-D-erythritol from CTP and 2-C-methyl-D-erythritol 4-phosphate (MEP). The protein is 2-C-methyl-D-erythritol 4-phosphate cytidylyltransferase of Thermosipho africanus (strain TCF52B).